Consider the following 463-residue polypeptide: Histone acetyltransferase mst1 (463 aa).

The 53-residue stretch at 22–74 folds into the Tudor-knot domain; that stretch reads VYKSKVFAFKDGEYRKAEILMIQKRTRGVVYYVHYNDYNKRLDEWITIDNIDL. The disordered stretch occupies residues 76-145; the sequence is KGIEYPPPEK…GSNAGNESLP (70 aa). Residues 87 to 99 show a composition bias toward basic residues; that stretch reads KKAHGKGKSSKRP. Low complexity predominate over residues 111–121; that stretch reads PSKTEPSTPST. Residues 179 to 451 form the MYST-type HAT domain; that stretch reads ARIRNINKIC…NGDLLADWQP (273 aa). Residues 212–237 form a C2HC MYST-type zinc finger; sequence VYICSFCFCYYGSERQFQRHREKCTL. Positions 262 to 283 match the ESA1-RPD3 motif motif; sequence RTWCRNICLLSKLFLDHKMLYY. At K279 the chain carries N6-acetyllysine; by autocatalysis. Acetyl-CoA contacts are provided by residues 320-324 and 329-335; these read ACILT and QRHGYGK. Residue E355 is the Proton donor/acceptor of the active site. S359 is a binding site for acetyl-CoA.

Belongs to the MYST (SAS/MOZ) family. In terms of assembly, component of the NuA4 histone acetyltransferase complex. Interacts with arp4. Autoacetylation at Lys-279 is required for proper function.

The protein resides in the nucleus. It localises to the chromosome. The enzyme catalyses L-lysyl-[histone] + acetyl-CoA = N(6)-acetyl-L-lysyl-[histone] + CoA + H(+). The catalysed reaction is L-lysyl-[protein] + acetyl-CoA = N(6)-acetyl-L-lysyl-[protein] + CoA + H(+). It catalyses the reaction 2-hydroxyisobutanoyl-CoA + L-lysyl-[protein] = N(6)-(2-hydroxyisobutanoyl)-L-lysyl-[protein] + CoA + H(+). It carries out the reaction (2E)-butenoyl-CoA + L-lysyl-[protein] = N(6)-(2E)-butenoyl-L-lysyl-[protein] + CoA + H(+). In terms of biological role, catalytic component of the NuA4 histone acetyltransferase (HAT) complex which is involved in epigenetic transcriptional activation of selected genes principally by acetylation of nucleosomal histones H4, H3, H2B, H2A and H2A variant H2A.Z. Acetylates histone H4 to form H4K5ac, H4K8ac, H4K12ac and H4K16ac, histone H3 to form H3K14ac, and histone H2A to form H2AK4ac and H2AK7ac. The NuA4 complex is involved in the DNA damage response and is required for chromosome segregation. The NuA4 complex plays a direct role in repair of DNA double-strand breaks (DSBs) through homologous recombination. Recruitment to promoters depends on H3K4me. Also acetylates non-histone proteins. In addition to protein acetyltransferase, can use different acyl-CoA substrates, such as 2-hydroxyisobutanoyl-CoA (2-hydroxyisobutyryl-CoA) or (2E)-butenoyl-CoA (crotonyl-CoA), and is able to mediate protein 2-hydroxyisobutyrylation and crotonylation, respectively. The chain is Histone acetyltransferase mst1 from Schizosaccharomyces pombe (strain 972 / ATCC 24843) (Fission yeast).